The chain runs to 414 residues: Ribulose bisphosphate carboxylase large chain (414 aa).

Substrate-binding residues include Asn102 and Thr152. Lys154 (proton acceptor) is an active-site residue. Lys156 is a binding site for substrate. Mg(2+) contacts are provided by Lys180, Asp182, and Glu183. N6-carboxylysine is present on Lys180. The Proton acceptor role is filled by His273. Substrate contacts are provided by Arg274, His306, and Ser358.

The protein belongs to the RuBisCO large chain family. Type I subfamily. Heterohexadecamer of 8 large chains and 8 small chains; disulfide-linked. The disulfide link is formed within the large subunit homodimers. Mg(2+) serves as cofactor. In terms of processing, the disulfide bond which can form in the large chain dimeric partners within the hexadecamer appears to be associated with oxidative stress and protein turnover.

It localises to the plastid. The protein localises to the chloroplast. The catalysed reaction is 2 (2R)-3-phosphoglycerate + 2 H(+) = D-ribulose 1,5-bisphosphate + CO2 + H2O. The enzyme catalyses D-ribulose 1,5-bisphosphate + O2 = 2-phosphoglycolate + (2R)-3-phosphoglycerate + 2 H(+). Functionally, ruBisCO catalyzes two reactions: the carboxylation of D-ribulose 1,5-bisphosphate, the primary event in carbon dioxide fixation, as well as the oxidative fragmentation of the pentose substrate in the photorespiration process. Both reactions occur simultaneously and in competition at the same active site. In Antrophyum reticulatum (Ox-tongue fern), this protein is Ribulose bisphosphate carboxylase large chain (rbcL).